We begin with the raw amino-acid sequence, 61 residues long: Photosystem II reaction center protein K (61 aa).

Residues 1–24 (MPNILSLTCICFNSVLCPTSFFFA) constitute a propeptide that is removed on maturation. Residues 32–52 (IFNPIVDVMPVIPVLFFLLAF) form a helical membrane-spanning segment.

It belongs to the PsbK family. In terms of assembly, PSII is composed of 1 copy each of membrane proteins PsbA, PsbB, PsbC, PsbD, PsbE, PsbF, PsbH, PsbI, PsbJ, PsbK, PsbL, PsbM, PsbT, PsbX, PsbY, PsbZ, Psb30/Ycf12, at least 3 peripheral proteins of the oxygen-evolving complex and a large number of cofactors. It forms dimeric complexes.

The protein resides in the plastid. It localises to the chloroplast thylakoid membrane. One of the components of the core complex of photosystem II (PSII). PSII is a light-driven water:plastoquinone oxidoreductase that uses light energy to abstract electrons from H(2)O, generating O(2) and a proton gradient subsequently used for ATP formation. It consists of a core antenna complex that captures photons, and an electron transfer chain that converts photonic excitation into a charge separation. The chain is Photosystem II reaction center protein K from Sorghum bicolor (Sorghum).